The primary structure comprises 147 residues: Large ribosomal subunit protein uL15 (147 aa).

A disordered region spans residues 1-42; the sequence is MTIKLHHLRPAPGSKSNKIRVGRGEGGKRGKTAGRGTKGTKA.

It belongs to the universal ribosomal protein uL15 family. As to quaternary structure, part of the 50S ribosomal subunit.

Its function is as follows. Binds to the 23S rRNA. This is Large ribosomal subunit protein uL15 from Rhodococcus erythropolis (strain PR4 / NBRC 100887).